We begin with the raw amino-acid sequence, 361 residues long: MSKFSFNIHHQHKKARNGVITTAHGEIRTPAFMPVGTRGTVKAMLPESVAETGADILLGNTYHLMLQPTAERIARLGGLHKFMNWDKPILTDSGGFQVMSLSKLRKITEEGVSFSSHINGDKYMLTPERSTEIQHLLGSTITMAFDECTPYPATFEEAKTSMQLTTRWANRSRNAFVKRDGYAQFGIIQGSVYEELREQSARDLVELDFEGYAIGGLAVGEGQELMFKVLDYAPDFLPQNKPCYLMGVGKPADIIGAVRRGIDMFDCVIPTRSGRNGQAFTKYGTVNIRNSKYADDNEPLEHDCLCPACKNYSKAYLHLLVRIGEILGAMLMTWHNLTYFQNLMSRIRKYIKLGKDFDFDS.

D92 acts as the Proton acceptor in catalysis. Residues 92–96, D146, Q189, and G216 contribute to the substrate site; that span reads DSGGF. The RNA binding stretch occupies residues 247–253; it reads GVGKPAD. Residue D266 is the Nucleophile of the active site. Positions 271–275 are RNA binding; important for wobble base 34 recognition; the sequence is TRSGR. Zn(2+) is bound by residues C304, C306, C309, and H335.

This sequence belongs to the queuine tRNA-ribosyltransferase family. Homodimer. Within each dimer, one monomer is responsible for RNA recognition and catalysis, while the other monomer binds to the replacement base PreQ1. Zn(2+) serves as cofactor.

The catalysed reaction is 7-aminomethyl-7-carbaguanine + guanosine(34) in tRNA = 7-aminomethyl-7-carbaguanosine(34) in tRNA + guanine. It participates in tRNA modification; tRNA-queuosine biosynthesis. Functionally, catalyzes the base-exchange of a guanine (G) residue with the queuine precursor 7-aminomethyl-7-deazaguanine (PreQ1) at position 34 (anticodon wobble position) in tRNAs with GU(N) anticodons (tRNA-Asp, -Asn, -His and -Tyr). Catalysis occurs through a double-displacement mechanism. The nucleophile active site attacks the C1' of nucleotide 34 to detach the guanine base from the RNA, forming a covalent enzyme-RNA intermediate. The proton acceptor active site deprotonates the incoming PreQ1, allowing a nucleophilic attack on the C1' of the ribose to form the product. After dissociation, two additional enzymatic reactions on the tRNA convert PreQ1 to queuine (Q), resulting in the hypermodified nucleoside queuosine (7-(((4,5-cis-dihydroxy-2-cyclopenten-1-yl)amino)methyl)-7-deazaguanosine). The sequence is that of Queuine tRNA-ribosyltransferase from Rickettsia felis (strain ATCC VR-1525 / URRWXCal2) (Rickettsia azadi).